The following is a 750-amino-acid chain: GTP pyrophosphokinase rsh (750 aa).

The HD domain occupies 45 to 144 (YFSHPLEVAA…VKLADRLHNM (100 aa)). A TGS domain is found at 390–451 (DQVFCFTPKG…KNGDEVDIIR (62 aa)). The tract at residues 587 to 613 (AAKVDPAATTPKPGKRALPIRGTNPDL) is disordered. The ACT domain maps to 676 to 750 (RISVSAINSP…SVSSAKRVNG (75 aa)).

The protein belongs to the RelA/SpoT family.

The enzyme catalyses GTP + ATP = guanosine 3'-diphosphate 5'-triphosphate + AMP. Functions as a (p)ppGpp synthase. In eubacteria ppGpp (guanosine 3'-diphosphate 5'-diphosphate) is a mediator of the stringent response that coordinates a variety of cellular activities in response to changes in nutritional abundance. Plays a role in adaptation of Brucella to its intracellular host environment. The polypeptide is GTP pyrophosphokinase rsh (rsh) (Brucella abortus (strain 2308)).